The chain runs to 333 residues: Lipoyl synthase (333 aa).

Residues Met-1–Lys-29 are disordered. Residues Cys-80, Cys-85, Cys-91, Cys-106, Cys-110, Cys-113, and Ser-320 each coordinate [4Fe-4S] cluster. Residues Cys-91–Thr-309 form the Radical SAM core domain.

The protein belongs to the radical SAM superfamily. Lipoyl synthase family. [4Fe-4S] cluster serves as cofactor.

The protein localises to the cytoplasm. It catalyses the reaction [[Fe-S] cluster scaffold protein carrying a second [4Fe-4S](2+) cluster] + N(6)-octanoyl-L-lysyl-[protein] + 2 oxidized [2Fe-2S]-[ferredoxin] + 2 S-adenosyl-L-methionine + 4 H(+) = [[Fe-S] cluster scaffold protein] + N(6)-[(R)-dihydrolipoyl]-L-lysyl-[protein] + 4 Fe(3+) + 2 hydrogen sulfide + 2 5'-deoxyadenosine + 2 L-methionine + 2 reduced [2Fe-2S]-[ferredoxin]. It participates in protein modification; protein lipoylation via endogenous pathway; protein N(6)-(lipoyl)lysine from octanoyl-[acyl-carrier-protein]: step 2/2. Functionally, catalyzes the radical-mediated insertion of two sulfur atoms into the C-6 and C-8 positions of the octanoyl moiety bound to the lipoyl domains of lipoate-dependent enzymes, thereby converting the octanoylated domains into lipoylated derivatives. This Ralstonia pickettii (strain 12J) protein is Lipoyl synthase.